The chain runs to 647 residues: DNA mismatch repair protein MutL (647 aa).

The tract at residues 346 to 378 (QTVHAPRSAAPRVSERASDEPPAWQPSPTSGEP) is disordered.

It belongs to the DNA mismatch repair MutL/HexB family.

Its function is as follows. This protein is involved in the repair of mismatches in DNA. It is required for dam-dependent methyl-directed DNA mismatch repair. May act as a 'molecular matchmaker', a protein that promotes the formation of a stable complex between two or more DNA-binding proteins in an ATP-dependent manner without itself being part of a final effector complex. In Limosilactobacillus fermentum (strain NBRC 3956 / LMG 18251) (Lactobacillus fermentum), this protein is DNA mismatch repair protein MutL.